We begin with the raw amino-acid sequence, 207 residues long: Probable isochorismatase (207 aa).

It belongs to the isochorismatase family.

The catalysed reaction is isochorismate + H2O = (2S,3S)-2,3-dihydroxy-2,3-dihydrobenzoate + pyruvate. It participates in antibiotic biosynthesis; phenazine biosynthesis. In terms of biological role, involved in the biosynthesis of the antibiotic phenazine, a nitrogen-containing heterocyclic molecule having important roles in virulence, competition and biological control. This isochorismatase may remove pyruvate from chorismate during the formation of the phenazine ring structure and/or stabilize the phenazine biosynthetic complex. The polypeptide is Probable isochorismatase (phzA) (Pseudomonas chlororaphis (Pseudomonas aureofaciens)).